A 277-amino-acid polypeptide reads, in one-letter code: Putative hydro-lyase BP1875 (277 aa).

Belongs to the D-glutamate cyclase family.

The chain is Putative hydro-lyase BP1875 from Bordetella pertussis (strain Tohama I / ATCC BAA-589 / NCTC 13251).